The chain runs to 399 residues: (R)-2-hydroxy-4-methylpentanoate CoA-transferase (399 aa).

Aspartate 171 (nucleophile) is an active-site residue.

The protein belongs to the CoA-transferase III family. As to quaternary structure, homodimer.

The enzyme catalyses 4-methylpentanoyl-CoA + (2R)-hydroxy-4-methylpentanoate = (R)-2-hydroxy-4-methylpentanoyl-CoA + 4-methylpentanoate. The protein operates within amino-acid degradation; L-leucine degradation. In terms of biological role, involved in the reductive branch of L-leucine fermentation. Catalyzes the transfer of the CoA moiety from 4-methylpentanoyl-CoA (isocaproyl-CoA) to (R)-2-hydroxy-4-methylpentanoate ((R)-2-hydroxyisocaproate), leading to the formation of (R)-2-hydroxy-4-methylpentanoyl-CoA. Other CoA thioesters, such as acetyl-CoA or butyryl-CoA, are not accepted as substrates. The polypeptide is (R)-2-hydroxy-4-methylpentanoate CoA-transferase (Clostridioides difficile (Peptoclostridium difficile)).